The sequence spans 494 residues: MVLATNSDSDEHLHSTFASRYVRAVVPRFKMPDHCMPKDAAYQVINDELMLDGNPRLNLASFVTTWMEPECDKLIMDSVNKNYVDMDEYPVTTELQNRCVNMIANLFHAPVGEDEAAIGCGTVGSSEAIMLAGLAFKRKWQHRRKAQGLPIDKPNIVTGANVQVCWEKFARYFEVELKEVKLSEDYYVMDPAKAVEMVDENTICVAAILGSTLTGEFEDVKQLNDLLAEKNAETGWETPIHVDAASGGFIAPFLYPDLEWDFRLPWVKSINVSGHKYGLVYAGVGWVVWRTKDDLPEELVFHINYLGADQPTFTLNFSKGSSQIIAQYYQFIRLGFEGYKNIMENCMDNARRLREGIEMTGKFNIVSKDIGVPLVAFSLKDSSKHTVFEIAESLRKFGWIIPAYTMPADAQHIAVLRVVIREDFSRGLADRLITHIIQVLKEIEGLPSRIAHLAAAAAVSGDDEEVKVKTAKMSLEDITKYWKRLVEHKRNIVC.

An N6-(pyridoxal phosphate)lysine modification is found at lysine 276.

This sequence belongs to the group II decarboxylase family. In terms of assembly, homohexamer. Interacts with calmodulin. Requires pyridoxal 5'-phosphate as cofactor. Expressed in flowers.

It catalyses the reaction L-glutamate + H(+) = 4-aminobutanoate + CO2. Its function is as follows. Catalyzes the production of GABA. The calmodulin-binding is calcium-dependent and it is proposed that this may, directly or indirectly, form a calcium regulated control of GABA biosynthesis. This chain is Glutamate decarboxylase 5 (GAD5), found in Arabidopsis thaliana (Mouse-ear cress).